Here is a 508-residue protein sequence, read N- to C-terminus: Maturase K (508 aa).

The protein belongs to the intron maturase 2 family. MatK subfamily.

The protein resides in the plastid. It localises to the chloroplast. Usually encoded in the trnK tRNA gene intron. Probably assists in splicing its own and other chloroplast group II introns. This chain is Maturase K, found in Antirrhinum majus (Garden snapdragon).